We begin with the raw amino-acid sequence, 64 residues long: Alpha-mammal toxin Lqh2 (64 aa).

Positions 2–64 (KDGYIVDDVN…VRTKGPGRCR (63 aa)) constitute an LCN-type CS-alpha/beta domain. Cystine bridges form between Cys12/Cys63, Cys16/Cys36, Cys22/Cys46, and Cys26/Cys48. Arg64 is modified (arginine amide).

Belongs to the long (4 C-C) scorpion toxin superfamily. Sodium channel inhibitor family. Alpha subfamily. Expressed by the venom gland.

Its subcellular location is the secreted. In terms of biological role, alpha toxins bind voltage-independently at site-3 of sodium channels (Nav) and inhibit the inactivation of the activated channels, thereby blocking neuronal transmission. The dissociation is voltage-dependent. Is active on mammals and competes for alpha-toxins binding on both mammalian and cockroach sodium channels. This chain is Alpha-mammal toxin Lqh2, found in Leiurus hebraeus (Hebrew deathstalker scorpion).